A 178-amino-acid chain; its full sequence is uncharacterized protein (178 aa).

Residues 1-89 form a disordered region; sequence MSAKEGSSHP…GEKKGKTEKL (89 aa). Basic and acidic residues-rich tracts occupy residues 44–53 and 61–89; these read PYQKNEKVVV and AFLH…TEKL.

This is an uncharacterized protein from Schizosaccharomyces pombe (strain 972 / ATCC 24843) (Fission yeast).